Reading from the N-terminus, the 128-residue chain is Claw keratin (128 aa).

A run of 2 repeats spans residues 83-91 and 92-100. Residues 83–104 form a 3 X 9 AA tandem repeats, Gly-rich region; sequence GGYGGLGGYGGYGGLGGYGGYG. The stretch at 101–109 is one 3; approximate repeat; the sequence is GGYGGFGSC.

Belongs to the avian keratin family. As to expression, abundantly expressed in the claw and at a low level in feather tissue.

In Gallus gallus (Chicken), this protein is Claw keratin (CKER1).